Here is a 179-residue protein sequence, read N- to C-terminus: Large ribosomal subunit protein uL5 (179 aa).

It belongs to the universal ribosomal protein uL5 family. Part of the 50S ribosomal subunit; part of the 5S rRNA/L5/L18/L25 subcomplex. Contacts the 5S rRNA and the P site tRNA. Forms a bridge to the 30S subunit in the 70S ribosome.

Its function is as follows. This is one of the proteins that bind and probably mediate the attachment of the 5S RNA into the large ribosomal subunit, where it forms part of the central protuberance. In the 70S ribosome it contacts protein S13 of the 30S subunit (bridge B1b), connecting the 2 subunits; this bridge is implicated in subunit movement. Contacts the P site tRNA; the 5S rRNA and some of its associated proteins might help stabilize positioning of ribosome-bound tRNAs. This Staphylococcus aureus (strain MW2) protein is Large ribosomal subunit protein uL5.